The chain runs to 360 residues: UDP-N-acetylglucosamine--N-acetylmuramyl-(pentapeptide) pyrophosphoryl-undecaprenol N-acetylglucosamine transferase (360 aa).

Ser-198 and Gln-289 together coordinate UDP-N-acetyl-alpha-D-glucosamine.

This sequence belongs to the glycosyltransferase 28 family. MurG subfamily.

The protein localises to the cell membrane. The enzyme catalyses Mur2Ac(oyl-L-Ala-gamma-D-Glu-L-Lys-D-Ala-D-Ala)-di-trans,octa-cis-undecaprenyl diphosphate + UDP-N-acetyl-alpha-D-glucosamine = beta-D-GlcNAc-(1-&gt;4)-Mur2Ac(oyl-L-Ala-gamma-D-Glu-L-Lys-D-Ala-D-Ala)-di-trans,octa-cis-undecaprenyl diphosphate + UDP + H(+). It functions in the pathway cell wall biogenesis; peptidoglycan biosynthesis. In terms of biological role, cell wall formation. Catalyzes the transfer of a GlcNAc subunit on undecaprenyl-pyrophosphoryl-MurNAc-pentapeptide (lipid intermediate I) to form undecaprenyl-pyrophosphoryl-MurNAc-(pentapeptide)GlcNAc (lipid intermediate II). The protein is UDP-N-acetylglucosamine--N-acetylmuramyl-(pentapeptide) pyrophosphoryl-undecaprenol N-acetylglucosamine transferase of Streptococcus pyogenes serotype M18 (strain MGAS8232).